We begin with the raw amino-acid sequence, 194 residues long: Transposon Tn2501 resolvase (194 aa).

The Resolvase/invertase-type recombinase catalytic domain occupies 3–143; the sequence is RVFAYCRVST…SGIARAKATG (141 aa). The active-site O-(5'-phospho-DNA)-serine intermediate is Ser11. The segment at residues 170–189 is a DNA-binding region (H-T-H motif); it reads ISAIAREFNTTRQTILRVKA.

The protein belongs to the site-specific recombinase resolvase family.

Functionally, resolvase catalyzes the resolution (a site-specific recombination) of the cointegrated replicon to yield the final transposition products. This Escherichia coli protein is Transposon Tn2501 resolvase (tnpR).